We begin with the raw amino-acid sequence, 296 residues long: MSFFHASQRDALNQSLAEVQGQINVSFEFFPPRTSEMEQTLWNSIDRLSSLKPKFVSVTYGANSGERDRTHSIIKGIKDRTGLEAAPHLTCIDATPDELRTIARDYWNNGIRHIVALRGDLPPGSGKPEMYASDLVTLLKEVADFDISVAAYPEVHPEAKSAQADLLNLKRKVDAGANRAITQFFFDVESYLRFRDRCVSAGIDVEIIPGILPVSNFKQAKKFADMTNVRIPAWMAQMFDGLDDDAETRKLVGANIAMDMVKILSREGVKDFHFYTLNRAEMSYAICHTLGVRPGL.

The Proton donor/acceptor role is filled by glutamate 28. Threonine 59 provides a ligand contact to NADH. Residues tyrosine 60, alanine 62, histidine 88, arginine 118, glycine 119, aspartate 120, alanine 132, tyrosine 152, histidine 156, alanine 159, aspartate 165, asparagine 168, arginine 171, and lysine 172 each contribute to the FAD site. Aspartate 120 contributes to the (6S)-5-methyl-5,6,7,8-tetrahydrofolate binding site. Position 183 (glutamine 183) interacts with NADH. (6S)-5-methyl-5,6,7,8-tetrahydrofolate is bound by residues glutamine 183, glutamine 219, and arginine 279.

It belongs to the methylenetetrahydrofolate reductase family. Homotetramer. It depends on FAD as a cofactor.

The enzyme catalyses (6S)-5-methyl-5,6,7,8-tetrahydrofolate + NAD(+) = (6R)-5,10-methylene-5,6,7,8-tetrahydrofolate + NADH + H(+). It functions in the pathway one-carbon metabolism; tetrahydrofolate interconversion. Its pathway is amino-acid biosynthesis; L-methionine biosynthesis via de novo pathway. In terms of biological role, catalyzes the NADH-dependent reduction of 5,10-methylenetetrahydrofolate to 5-methyltetrahydrofolate. Is required to provide the methyl group necessary for methionine synthetase to convert homocysteine to methionine; the methyl group is given by 5-methyltetrahydrofolate. Can also use NADPH as the reductant, but much less effectively than NADH. The sequence is that of 5,10-methylenetetrahydrofolate reductase from Escherichia coli (strain K12).